Reading from the N-terminus, the 1872-residue chain is MALEEVPSVSRDLDHSALRALSSASPSSLPSSCSRSTTSLLFQSKGIEFRLSIPDTFLSLVEPHRNAFLASYSTQGNTQSPLELALSFLYFLLDQKVSPLVLSSVLRAFNLEFLGNRSEIHSLIADLTPIPKQRQRWLGIYYRFLEASDDKRAEIPLSSIFQHARTNEFQLMAVFGGQGECSRTCLNEFAELYSSYEPMLRRLVGVIGPCLYNLSTSDEYSSYYRNQPLDLKAWITDENHVPDLGFVASAPVSVPVIGALSLARYCVTCHITGCNPGLMRSMLRTATGHSQGLLAAIVVAVSHSWDSFYQATEEVIELLFRLGWECHHAAPCSMVPAANYADVDGANGPSYMLSLRGLKRQETEATIDHVNASLPEDKRLYLALINAYDQFVVAGPVASLLRLESHLVEITSKDIDQSRIPFRDRKPYIQHSFLPVSTPFHTPYLTRAAARVKKQFAARPIPTRRLAIPVYHTHTGLDLRKQGGCALSIAIDAIASEPCNWPCAVASYHASHILTFDRGGLAPLIKRVREGCGVRVVQVADLDTRDSEMATMRDLFATKLLPTSTKLQSWGQQFRPGLASGPKIQLETRLNRVLGAPPIMVAGMTPTTVHPDFVAAIMNAGYHAELAGGGYHNASAMEAAIYDLVSSIPKERGITCNLIYANPRSISWQIELLRRLSNGNVRIDGLTIGAGVPSLTVASEYIETLGLRHISFKPGSVAAIRKVVEIAREHPDFPVILQWTGGRGGGHHSFEDFHAPIIATYGIIRQEPNVYLVAGSGFGDSDSVYPYLTGSWSVAMGHPAMPFDGILLGSRMMVAKEAHTSPAVRRIIAATPGVSDSEWEKTYSGPAGGVITVTSEMGEPIHKIATRGVCLWADLDKTVFSLSRRDRLTYLAQHRRSIIQRLNADFAKPWFGCNSDGEAVDLEDMTYLEVLKRLTALMFVPNKQWIDASYIEFTMTIAQRWLQRLQFDSEAAASLTISLLRKAPDRFLAIFADVCPTAEGDLLNPEDISFFLMQCKTPGRKPVNFIPALDDDFEFYFKKDSLWQAEDVDAVLDQDAERVCILHGPIAARYSKSDSEPAGYILDSILNGVVARLRETSTAEMLLPKLERGHTTPASWSTLSLTERDTSEETSDTSITSLSELIENHSFSSGGVDSVPRPSHPLWMRALLEDDVVLQGTLRQKNPFRDLIQSSPNTVVNYNQDSSELMVTAQEPYHISSFMRAVCHDGVMDKRNERIKSFYSLLWFGHDCDTSQSLNGVFYGPDITLTEDLLDEYNATIGPAYSDHRQMVPSTDVLPISMGIIIAWDVISRPLILRQIGGDLLRLVHRSNTFEYYSDTRLRLGDSVSSRSEVQAVYDDDGGRVVIVEAQILRSRVPVMTVTSTFLFRGSKGTTVPAFRRAREQKWTYDVTSEFEESILLSRNWFRPCDPSLTLVGKSMIFDLNSLVKYHDDGNMELHVQGTAMSQTNGQQQKLAIVDFRNTCTGNPVLDFLQRRGKLAEPRTEFKIPGWAGKSTMDIQMPPSNEPYAQLSKDFNPIHTSPIFSSLAGVPGTLCHGMCTSAIAERVLEHLGLGGDRERLRRFEARFTDMVMPLEKLVVEIKHTGMVDGRMCFSILAKRKETDERVLEGDAEVEQPRTAYLFTGQGSQSKGMGMDLYKTSTGQFLLTNKGGLFWTSCKTTQSPLPIRQKYLDITTEVVLPNGKRVQKPVFPGLTPTSTSYTFRHPRGLLYSTQFAQPAILLFEAAAFAELRAKGYVSHGAVYAGHSLGEFGALSALSRSVPTGALVELAFYRGSVMQASVASDNDGGTTYGMVAMNPKRVGTFFTQTTLDRLVSQIAAQSQELLEIVNFNIEGEQYVCSGTIDRPISGGTWPSLSG.

The segment at 174–425 is acetyltransferase (AT) domain; it reads VFGGQGECSR…DQSRIPFRDR (252 aa). Residues 591–836 form an enoyl reductase (ER) domain region; it reads NRVLGAPPIM…IIAATPGVSD (246 aa). The tract at residues 1111–1132 is disordered; the sequence is TTPASWSTLSLTERDTSEETSD. The tract at residues 1158 to 1597 is dehydratase (DH) domain; it reads PSHPLWMRAL…MPLEKLVVEI (440 aa). A MaoC-like domain is found at 1518 to 1617; it reads PPSNEPYAQL…CFSILAKRKE (100 aa).

It belongs to the fungal fatty acid synthetase subunit beta family. [Alpha(6)beta(6)] hexamers of two multifunctional subunits (alpha and beta).

The enzyme catalyses acetyl-CoA + n malonyl-CoA + 2n NADPH + 4n H(+) = a long-chain-acyl-CoA + n CoA + n CO2 + 2n NADP(+).. It catalyses the reaction holo-[ACP] + acetyl-CoA = acetyl-[ACP] + CoA. The catalysed reaction is holo-[ACP] + malonyl-CoA = malonyl-[ACP] + CoA. It carries out the reaction a (3R)-hydroxyacyl-[ACP] = a (2E)-enoyl-[ACP] + H2O. The enzyme catalyses a 2,3-saturated acyl-[ACP] + NAD(+) = a (2E)-enoyl-[ACP] + NADH + H(+). It catalyses the reaction (9Z)-octadecenoyl-[ACP] + H2O = (9Z)-octadecenoate + holo-[ACP] + H(+). The protein operates within secondary metabolite biosynthesis. Functionally, fatty acid synthase beta subunit; part of the pki gene cluster that mediates the biosynthesis of 2,4-dihydroxy-3-methyl-6-(2-oxoundecyl)benzaldehyde. The first step in the pathway is the generation of the decanoyl starter unit by the FAS composed of subunits pkiB and pkiC, which is then transferred directly from the FAS to the SAT domain of the non-reducing polyketide synthase pkiA. PkiA condenses the decanoyyl starter unit with 4 malonyl-CoA units and performs one methylation step to yield 2,4-dihydroxy-3-methyl-6-(2-oxoundecyl)benzaldehyde. This chain is Fatty acid synthase beta subunit pkiC, found in Emericella nidulans (strain FGSC A4 / ATCC 38163 / CBS 112.46 / NRRL 194 / M139) (Aspergillus nidulans).